The following is a 485-amino-acid chain: ATP synthase subunit beta, cyanelle (485 aa).

162 to 169 (GGAGVGKT) contacts ATP.

This sequence belongs to the ATPase alpha/beta chains family. In terms of assembly, F-type ATPases have 2 components, CF(1) - the catalytic core - and CF(0) - the membrane proton channel. CF(1) has five subunits: alpha(3), beta(3), gamma(1), delta(1), epsilon(1). CF(0) has four main subunits: a(1), b(1), b'(1) and c(9-12).

The protein localises to the plastid. It localises to the cyanelle thylakoid membrane. It carries out the reaction ATP + H2O + 4 H(+)(in) = ADP + phosphate + 5 H(+)(out). Its function is as follows. Produces ATP from ADP in the presence of a proton gradient across the membrane. The catalytic sites are hosted primarily by the beta subunits. The sequence is that of ATP synthase subunit beta, cyanelle from Cyanophora paradoxa.